Reading from the N-terminus, the 530-residue chain is Potassium voltage-gated channel subfamily A member 6 (530 aa).

Residues 1–35 (MRSEKSLTLAAPGEVRGPEGEQQDAGEFQEAEGGG) are disordered. Phosphoserine is present on S3. Residues 21–30 (EQQDAGEFQE) are compositionally biased toward acidic residues. The chain crosses the membrane as a helical span at residues 172 to 193 (PARGIAIVSVLVILISIVIFCL). The segment at 203–239 (GRGGSNEGSGTRMSPASRGSHEEEDEDEDSYAFPGSI) is disordered. Position 222 is a phosphoserine; by CK2 (S222). Residues 264-285 (FFLVETLCIVWFTFELLVRFSA) form a helical membrane-spanning segment. C286 is lipidated: S-palmitoyl cysteine. A helical transmembrane segment spans residues 297–317 (MNIIDLVAIFPYFITLGTELV). Residues 339 to 359 (LAILRVIRLVRVFRIFKLSRH) traverse the membrane as a helical; Voltage-sensor segment. Residues 361–374 (KGLQILGKTLQASM) form an S4-S5 linker region. A helical transmembrane segment spans residues 375-396 (RELGLLIFFLFIGVILFSSAVY). Residues 411 to 422 (PDAFWWAVVTMT) constitute an intramembrane region (helical). Residues 423 to 428 (TVGYGD) carry the Selectivity filter motif. An intramembrane segment occupies 423 to 430 (TVGYGDMY). The helical transmembrane segment at 438–466 (IVGSLCAIAGVLTIALPVPVIVSNFNYFY) threads the bilayer. S512 carries the phosphoserine; by PKA modification. The short motif at 527-529 (LTE) is the PDZ-binding element. The residue at position 528 (T528) is a Phosphothreonine; by PKA.

The protein belongs to the potassium channel family. A (Shaker) (TC 1.A.1.2) subfamily. Kv1.6/KCNA6 sub-subfamily. As to quaternary structure, homotetramer and heterotetramer of potassium channel proteins. Interacts with KCNAB1 and KCNAB2.

It localises to the cell membrane. The catalysed reaction is K(+)(in) = K(+)(out). Voltage-gated potassium channel that mediates transmembrane potassium transport in excitable membranes. Forms tetrameric potassium-selective channels through which potassium ions pass in accordance with their electrochemical gradient. The channel alternates between opened and closed conformations in response to the voltage difference across the membrane. Can form functional homotetrameric channels and heterotetrameric channels that contain variable proportions of KCNA1, KCNA2, KCNA4, KNCA5, KCNA6, and possibly other family members as well; channel properties depend on the type of alpha subunits that are part of the channel. Channel properties are modulated by cytoplasmic beta subunits that regulate the subcellular location of the alpha subunits and promote rapid inactivation. Homotetrameric channels display rapid activation and slow inactivation. This chain is Potassium voltage-gated channel subfamily A member 6 (Kcna6), found in Rattus norvegicus (Rat).